The following is a 363-amino-acid chain: S-adenosylmethionine:tRNA ribosyltransferase-isomerase (363 aa).

It belongs to the QueA family. In terms of assembly, monomer.

The protein resides in the cytoplasm. It carries out the reaction 7-aminomethyl-7-carbaguanosine(34) in tRNA + S-adenosyl-L-methionine = epoxyqueuosine(34) in tRNA + adenine + L-methionine + 2 H(+). The protein operates within tRNA modification; tRNA-queuosine biosynthesis. Transfers and isomerizes the ribose moiety from AdoMet to the 7-aminomethyl group of 7-deazaguanine (preQ1-tRNA) to give epoxyqueuosine (oQ-tRNA). The sequence is that of S-adenosylmethionine:tRNA ribosyltransferase-isomerase from Magnetococcus marinus (strain ATCC BAA-1437 / JCM 17883 / MC-1).